The chain runs to 548 residues: Membrane protein insertase YidC (548 aa).

The chain crosses the membrane as a helical span at residues 6-26 (NLLVIALLFVSFMIWQAWEQD). The segment at 28–55 (NPQPQAQQTTQTTTTAAGSAADQGVPAS) is disordered. Residues 30–50 (QPQAQQTTQTTTTAAGSAADQ) show a composition bias toward low complexity. The next 4 helical transmembrane spans lie at 350-370 (FVGN…GIMY), 420-440 (LGGC…YYML), 458-478 (LSAQ…MFFI), and 499-519 (PVIF…YYIV).

Belongs to the OXA1/ALB3/YidC family. Type 1 subfamily. Interacts with the Sec translocase complex via SecD. Specifically interacts with transmembrane segments of nascent integral membrane proteins during membrane integration.

The protein resides in the cell inner membrane. Required for the insertion and/or proper folding and/or complex formation of integral membrane proteins into the membrane. Involved in integration of membrane proteins that insert both dependently and independently of the Sec translocase complex, as well as at least some lipoproteins. Aids folding of multispanning membrane proteins. The protein is Membrane protein insertase YidC of Escherichia coli O139:H28 (strain E24377A / ETEC).